We begin with the raw amino-acid sequence, 335 residues long: Probable G-protein coupled receptor 174 (335 aa).

The Extracellular portion of the chain corresponds to Met-1 to Thr-27. N-linked (GlcNAc...) asparagine glycans are attached at residues Asn-4 and Asn-8. A helical transmembrane segment spans residues Val-28 to Met-48. The Cytoplasmic portion of the chain corresponds to Lys-49–Arg-53. Residues Ala-54–Leu-74 traverse the membrane as a helical segment. At Arg-75–Cys-91 the chain is on the extracellular side. Residues Cys-91 and Cys-168 are joined by a disulfide bond. Residues Met-92–Ile-112 form a helical membrane-spanning segment. The Cytoplasmic portion of the chain corresponds to Ser-113 to Asp-134. Residues Leu-135 to Leu-155 form a helical membrane-spanning segment. Residues Arg-156–Ser-182 are Extracellular-facing. Asn-164 is a glycosylation site (N-linked (GlcNAc...) asparagine). Residues Val-183 to Tyr-203 traverse the membrane as a helical segment. The Cytoplasmic segment spans residues Cys-204–Met-231. A helical membrane pass occupies residues Ile-232–Leu-252. The Extracellular segment spans residues Asp-253 to Arg-268. Residues Val-269 to Pro-289 form a helical membrane-spanning segment. Topologically, residues Val-290–Cys-335 are cytoplasmic.

The protein belongs to the G-protein coupled receptor 1 family. Interacts with GNA13. Interacts with CCL21. Expressed in spleen and, at low levels, in brain. Highly expressed in developing and mature regulatory T-cells.

The protein localises to the cell membrane. Its function is as follows. G-protein-coupled receptor of lysophosphatidylserine (LysoPS) that plays different roles in immune response. Plays a negative role in regulatory T-cell accumulation and homeostasis. Under inflammatory conditions where LysoPS production increases, contributes to the down-regulation of regulatory T-cell activity to favor effector response. Mediates the suppression of IL-2 production in activated T-lymphocytes leading to inhibition of growth, proliferation and differentiation of T-cells. Mechanistically, acts via G(s)-containing heterotrimeric G proteins to trigger elevated cyclic AMP levels and protein kinase A/PKA activity, which may in turn act to antagonize proximal TCR signaling. Plays an important role in the initial period of sepsis through the regulation of macrophage polarization and pro- and anti-inflammatory cytokine secretions. Upon testosterone treatment, acts as a receptor for CCL21 and subsequently triggers through G(q)-alpha and G(12)/G(13) proteins a calcium flux leading to chemotactic effects on activated B-cells. Signals via GNA13 and PKA to promote CD86 up-regulation by follicular B-cells. This chain is Probable G-protein coupled receptor 174 (Gpr174), found in Mus musculus (Mouse).